The chain runs to 211 residues: Rho-related GTP-binding protein RhoF (211 aa).

Met1 carries the post-translational modification N-acetylmethionine. A GTP-binding site is contributed by Gly26–Thr33. The short motif at Tyr48 to Tyr56 is the Effector region element. GTP contacts are provided by residues Asp73–Gln77 and Cys131–Asp134. Position 208 is a cysteine methyl ester (Cys208). Cys208 is lipidated: S-geranylgeranyl cysteine. Positions Leu209–Leu211 are cleaved as a propeptide — removed in mature form.

Belongs to the small GTPase superfamily. Rho family.

It localises to the cell membrane. Its subcellular location is the cytoplasm. The protein resides in the cytoskeleton. In terms of biological role, plasma membrane-associated small GTPase which cycles between an active GTP-bound and an inactive GDP-bound state. Causes the formation of thin, actin-rich surface projections called filopodia. Functions cooperatively with CDC42 and Rac to generate additional structures, increasing the diversity of actin-based morphology. The chain is Rho-related GTP-binding protein RhoF (RHOF) from Homo sapiens (Human).